Here is a 366-residue protein sequence, read N- to C-terminus: Homer protein homolog 1 (366 aa).

The region spanning 1–110 (MGEQPIFSTR…EKFQEFKEAA (110 aa)) is the WH1 domain. At glycine 2 the chain carries N-acetylglycine. Positions 114–189 (KEKSQEKMEL…RTQGLSHASS (76 aa)) are disordered. Residues 138–147 (SPLTPESING) show a composition bias toward polar residues. The stretch at 193 to 364 (KHWEAELATL…LRDNLAKLLE (172 aa)) forms a coiled coil. A required for tetramerization region spans residues 302–366 (KLQEVEIRNK…DNLAKLLECS (65 aa)). Phosphoserine is present on serine 318.

This sequence belongs to the Homer family. Tetramer; this tetrameric structure is critical for forming the high-order complex with SHANK1, which in turn is necessary for the structural and functional integrity of dendritic spines. Interacts with GRM1, GRM5, ITPR1, DYN3, RYR1, RYR2 and SHANK3. Interacts with IFT57 and OPHN1. Isoform 1 and isoform 2 encode coiled-coil structures that mediate homo- and heteromultimerization. Interacts with SHANK1; forms high-order polymerized complex with a mesh-like network structure, at least composed of SHANK1, HOMER1 and DLGAP1; the complex formation is SHANK1 multimerization dependent. Interacts with NFATC4. Interacts with DAGLA (via PPXXF motif); this interaction is required for the cell membrane localization of DAGLA. Interacts with SRGAP2. Highly expressed in cortex, Purkinje cells of the cerebellum, hippocampus, striatum and olfactory bulb. Isoform 1 and isoform 3 are expressed in skeletal and cardiac muscle.

It localises to the cytoplasm. The protein localises to the postsynaptic density. The protein resides in the synapse. Its subcellular location is the cell projection. It is found in the dendritic spine. Functionally, postsynaptic density scaffolding protein. Binds and cross-links cytoplasmic regions of GRM1, GRM5, ITPR1, DNM3, RYR1, RYR2, SHANK1 and SHANK3. By physically linking GRM1 and GRM5 with ER-associated ITPR1 receptors, it aids the coupling of surface receptors to intracellular calcium release. May also couple GRM1 to PI3 kinase through its interaction with AGAP2. Differentially regulates the functions of the calcium activated channel ryanodine receptors RYR1 and RYR2. Isoform 1 decreases the activity of RYR2, and increases the activity of RYR1, whereas isoform 3 counteracts the effects by competing for binding sites. Isoform 1 regulates the trafficking and surface expression of GRM5. Isoform 3 acts as a natural dominant negative, in dynamic competition with constitutively expressed isoform 1, and isoform 2 to regulate synaptic metabotropic glutamate function. Isoform 3, may be involved in the structural changes that occur at synapses during long-lasting neuronal plasticity and development. Forms a high-order complex with SHANK1, which in turn is necessary for the structural and functional integrity of dendritic spines. Negatively regulates T cell activation by inhibiting the calcineurin-NFAT pathway. Acts by competing with calcineurin/PPP3CA for NFAT protein binding, hence preventing NFAT activation by PPP3CA. The sequence is that of Homer protein homolog 1 from Rattus norvegicus (Rat).